Here is a 110-residue protein sequence, read N- to C-terminus: Protein RnfH (110 aa).

A disordered region spans residues 86–110 (RKRAAQQAKDQEEKKKAEKSANKEN). The segment covering 94–110 (KDQEEKKKAEKSANKEN) has biased composition (basic and acidic residues).

The protein belongs to the UPF0125 (RnfH) family.

This Mannheimia succiniciproducens (strain KCTC 0769BP / MBEL55E) protein is Protein RnfH.